Here is a 91-residue protein sequence, read N- to C-terminus: Small ribosomal subunit protein uS15c (91 aa).

The protein belongs to the universal ribosomal protein uS15 family. In terms of assembly, part of the 30S ribosomal subunit.

It localises to the plastid. It is found in the chloroplast. The sequence is that of Small ribosomal subunit protein uS15c (rps15) from Adiantum capillus-veneris (Maidenhair fern).